The primary structure comprises 733 residues: SWR1-complex protein 4 (733 aa).

Disordered stretches follow at residues 1 to 34 (MTSHDVRDVLNLPSDHAGPRPSKKARTATPRPNL) and 98 to 128 (PDGTVQDGSAEGQDSAATADNSADKPEDSSF). One can recognise an SANT domain in the interval 146 to 217 (NTNLKHPDWT…DLKARYYEVA (72 aa)). Residues 247-299 (KQEQNRKRFAENTLKRSSDEAREEEALLLEIKRIMARTERFNEERRELYNRLD) are a coiled coil. The span at 371–384 (AASRRESLAASSTA) shows a compositional bias: low complexity. Disordered regions lie at residues 371-488 (AASR…GSGP) and 564-733 (KKAE…KQKK). Composition is skewed to basic and acidic residues over residues 387–423 (NDHHEPPVREPPVRHERQESRSHHRNESRSERADRHG), 463–484 (PERRKLSEHEEQVYGVSHHDRL), 564–589 (KKAERERAAREAAEARGETVEKKGGE), and 610–653 (DDAK…KGEE). A compositionally biased stretch (low complexity) spans 699–710 (GSSSGAGASSGA).

The protein belongs to the SWC4 family. Component of the SWR1 chromatin-remodeling complex and of the NuA4 histone acetyltransferase complex.

Its subcellular location is the nucleus. Its function is as follows. Component of the SWR1 complex which mediates the ATP-dependent exchange of histone H2A for the H2A variant H2A.Z leading to transcriptional regulation of selected genes by chromatin remodeling. Component of the NuA4 histone acetyltransferase complex which is involved in transcriptional activation of selected genes principally by acetylation of nucleosomal histone H4 and H2A. The NuA4 complex is also involved in DNA repair. This chain is SWR1-complex protein 4 (crc-1), found in Neurospora crassa (strain ATCC 24698 / 74-OR23-1A / CBS 708.71 / DSM 1257 / FGSC 987).